We begin with the raw amino-acid sequence, 507 residues long: ATP synthase subunit alpha (507 aa).

Residues 118–141 form a disordered region; sequence VDGLGPIETTETRPIESPAPGVMD. 172 to 179 is an ATP binding site; sequence GDRQTGKT.

It belongs to the ATPase alpha/beta chains family. F-type ATPases have 2 components, CF(1) - the catalytic core - and CF(0) - the membrane proton channel. CF(1) has five subunits: alpha(3), beta(3), gamma(1), delta(1), epsilon(1). CF(0) has three main subunits: a(1), b(2) and c(9-12). The alpha and beta chains form an alternating ring which encloses part of the gamma chain. CF(1) is attached to CF(0) by a central stalk formed by the gamma and epsilon chains, while a peripheral stalk is formed by the delta and b chains.

It localises to the cell membrane. It carries out the reaction ATP + H2O + 4 H(+)(in) = ADP + phosphate + 5 H(+)(out). Produces ATP from ADP in the presence of a proton gradient across the membrane. The alpha chain is a regulatory subunit. This Anoxybacillus flavithermus (strain DSM 21510 / WK1) protein is ATP synthase subunit alpha.